The chain runs to 212 residues: uncharacterized protein (212 aa).

S-adenosyl-L-methionine is bound by residues Gly-53, Glu-74, and Asp-97.

The protein belongs to the methyltransferase superfamily. YrrT family.

Could be a S-adenosyl-L-methionine-dependent methyltransferase. This is an uncharacterized protein from Bacillus cereus (strain ATCC 14579 / DSM 31 / CCUG 7414 / JCM 2152 / NBRC 15305 / NCIMB 9373 / NCTC 2599 / NRRL B-3711).